The sequence spans 68 residues: UPF0253 protein ASA_2184 (68 aa).

It belongs to the UPF0253 family.

The chain is UPF0253 protein ASA_2184 from Aeromonas salmonicida (strain A449).